The chain runs to 361 residues: PTI1-like tyrosine-protein kinase At3g15890 (361 aa).

The region spanning 39–328 (FNYDNKLGEG…ISELEANPLF (290 aa)) is the Protein kinase domain. ATP contacts are provided by residues 45–53 (LGEGRFGSV) and Lys67. Asp165 (proton acceptor) is an active-site residue. Disordered stretches follow at residues 195–219 (TGDG…SGKE) and 323–361 (EANP…QQQE). Residues 351–361 (LEDKDHQQQQE) show a composition bias toward basic and acidic residues.

It belongs to the protein kinase superfamily. Tyr protein kinase family.

It carries out the reaction L-tyrosyl-[protein] + ATP = O-phospho-L-tyrosyl-[protein] + ADP + H(+). This chain is PTI1-like tyrosine-protein kinase At3g15890, found in Arabidopsis thaliana (Mouse-ear cress).